Reading from the N-terminus, the 130-residue chain is Small ribosomal subunit protein uS11 (130 aa).

It belongs to the universal ribosomal protein uS11 family. Part of the 30S ribosomal subunit. Interacts with proteins S7 and S18. Binds to IF-3.

In terms of biological role, located on the platform of the 30S subunit, it bridges several disparate RNA helices of the 16S rRNA. Forms part of the Shine-Dalgarno cleft in the 70S ribosome. This chain is Small ribosomal subunit protein uS11, found in Campylobacter jejuni subsp. jejuni serotype O:6 (strain 81116 / NCTC 11828).